Reading from the N-terminus, the 231-residue chain is CLAVATA3/ESR (CLE)-related protein 4B-2 (231 aa).

The first 21 residues, 1-21 (MATNTMLCLLILSVVLALAFA), serve as a signal peptide directing secretion. Residues 21–83 (ATNKKGDEEP…SNQLPNNNWM (63 aa)) are required for secretion from the host cytoplasm to the host apoplasm. An N-linked (GlcNAc...) asparagine glycan is attached at Asn32. Positions 116–231 (RKTGMHSQRH…APAGPDPIHH (116 aa)) are disordered. Basic and acidic residues-rich tracts occupy residues 125–137 (HHEE…EKRV) and 144–221 (PIHH…EKRG). The A-1 repeat unit spans residues 127-135 (EETTLEQEK). The segment at 127–219 (EETTLEQEKR…HEETTFEQEK (93 aa)) is 5 X approximate repeat A. Residues 136-147 (RVAGAGPDPIHH) form a CLE-1 repeat. Positions 136–231 (RVAGAGPDPI…APAGPDPIHH (96 aa)) are 5 X approximate repeat CLE. The A-2 repeat unit spans residues 148 to 156 (EETTLEQEK). Residues 157–168 (RAVPAGPDPKHH) form a CLE-2 repeat. Residues 169–177 (EETTLEQEK) form an A-3 repeat. The CLE-3 repeat unit spans residues 178–189 (RAVPAGPDPKHH). The stretch at 190–198 (EETTLEQEK) is one A-4 repeat. Residues 199–210 (RAVPAGPDPKHH) form a CLE-4 repeat. The A-5 repeat unit spans residues 211–219 (EETTFEQEK). A CLE-5 repeat occupies 220 to 231 (RGAPAGPDPIHH).

The protein belongs to the CLV3/ESR signal peptide family. Highly expressed exclusively within the dorsal esophageal gland cell during syncytium formation in host plants.

It is found in the secreted. The protein resides in the host cytoplasm. It localises to the host extracellular space. The protein localises to the extracellular space. Its subcellular location is the apoplast. Mimics host plant CLE extracellular signal peptides that regulate cell fate. May play a role in the differentiation or division of feeding cells (syncytia) induced in plant roots during infection. In Globodera rostochiensis (Golden nematode worm), this protein is CLAVATA3/ESR (CLE)-related protein 4B-2 (CLE-4B-2).